Reading from the N-terminus, the 137-residue chain is Small ribosomal subunit protein uS12 (137 aa).

Disordered stretches follow at residues 1–22 and 37–57; these read MPTI…SKSP and KNPS…TPKK. Positions 9-19 are enriched in basic residues; it reads RKGRKSHKGKS. Residue Asp102 is modified to 3-methylthioaspartic acid.

This sequence belongs to the universal ribosomal protein uS12 family. Part of the 30S ribosomal subunit. Contacts proteins S8 and S17. May interact with IF1 in the 30S initiation complex.

Functionally, with S4 and S5 plays an important role in translational accuracy. Interacts with and stabilizes bases of the 16S rRNA that are involved in tRNA selection in the A site and with the mRNA backbone. Located at the interface of the 30S and 50S subunits, it traverses the body of the 30S subunit contacting proteins on the other side and probably holding the rRNA structure together. The combined cluster of proteins S8, S12 and S17 appears to hold together the shoulder and platform of the 30S subunit. In Limosilactobacillus fermentum (strain NBRC 3956 / LMG 18251) (Lactobacillus fermentum), this protein is Small ribosomal subunit protein uS12.